Here is a 60-residue protein sequence, read N- to C-terminus: Large ribosomal subunit protein uL30 (60 aa).

Belongs to the universal ribosomal protein uL30 family. Part of the 50S ribosomal subunit.

The protein is Large ribosomal subunit protein uL30 of Xanthobacter autotrophicus (strain ATCC BAA-1158 / Py2).